The primary structure comprises 951 residues: MPGPLGLLCFLALGLLGSAGPSGAAPPLCAAPCSCDGDRRVDCSGKGLTAVPEGLSAFTQALDISMNNITQLPEDAFKNFPFLEELQLAGNDLSFIHPKALSGLKELKVLTLQNNQLKTVPSEAIRGLSALQSLRLDANHITSVPEDSFEGLVQLRHLWLDDNSLTEVPVHPLSNLPTLQALTLALNKISSIPDFAFTNLSSLVVLHLHNNKIRSLSQHCFDGLDNLETLDLNYNNLGEFPQAIKALPSLKELGFHSNSISVIPDGAFDGNPLLRTIHLYDNPLSFVGNSAFHNLSDLHSLVIRGASMVQQFPNLTGTVHLESLTLTGTKISSIPNNLCQEQKMLRTLDLSYNNIRDLPSFNGCHALEEISLQRNQIYQIKEGTFQGLISLRILDLSRNLIHEIHSRAFATLGPITNLDVSFNELTSFPTEGLNGLNQLKLVGNFKLKEALAAKDFVNLRSLSVPYAYQCCAFWGCDSYANLNTEDNSLQDHSVAQEKGTADAANVTSTLENEEHSQIIIHCTPSTGAFKPCEYLLGSWMIRLTVWFIFLVALFFNLLVILTTFASCTSLPSSKLFIGLISVSNLFMGIYTGILTFLDAVSWGRFAEFGIWWETGSGCKVAGFLAVFSSESAIFLLMLATVERSLSAKDIMKNGKSNHLKQFRVAALLAFLGATVAGCFPLFHRGEYSASPLCLPFPTGETPSLGFTVTLVLLNSLAFLLMAVIYTKLYCNLEKEDLSENSQSSMIKHVAWLIFTNCIFFCPVAFFSFAPLITAISISPEIMKSVTLIFFPLPACLNPVLYVFFNPKFKEDWKLLKRRVTKKSGSVSVSISSQGGCLEQDFYYDCGMYSHLQGNLTVCDCCESFLLTKPVSCKHLIKSHSCPALAVASCQRPEGYWSDCGTQSAHSDYADEEDSFVSDSSDQVQACGRACFYQSRGFPLVRYAYNLPRVKD.

Positions 1 to 24 (MPGPLGLLCFLALGLLGSAGPSGA) are cleaved as a signal peptide. Positions 25–57 (APPLCAAPCSCDGDRRVDCSGKGLTAVPEGLSA) constitute an LRRNT domain. The Extracellular portion of the chain corresponds to 25–544 (APPLCAAPCS…LLGSWMIRLT (520 aa)). Disulfide bonds link Cys-29/Cys-35 and Cys-33/Cys-43. LRR repeat units lie at residues 58–79 (FTQA…AFKN), 82–103 (FLEE…ALSG), 106–127 (ELKV…AIRG), 130–151 (ALQS…SFEG), 154–177 (QLRH…SNLP), 178–199 (TLQA…AFTN), 202–223 (SLVV…CFDG), 226–247 (NLET…IKAL), 249–270 (SLKE…AFDG), and 273–294 (LLRT…AFHN). Asn-68 carries N-linked (GlcNAc...) asparagine glycosylation. Asn-199 carries an N-linked (GlcNAc...) asparagine glycan. N-linked (GlcNAc...) asparagine glycans are attached at residues Asn-294 and Asn-314. 5 LRR repeats span residues 320-341 (HLES…LCQE), 344-365 (MLRT…NGCH), 366-387 (ALEE…TFQG), 390-411 (SLRI…AFAT), and 414-435 (PITN…GLNG). The cysteines at positions 339 and 364 are disulfide-linked. Intrachain disulfides connect Cys-470–Cys-522 and Cys-471–Cys-476. An N-linked (GlcNAc...) asparagine glycan is attached at Asn-505. Residues 545–565 (VWFIFLVALFFNLLVILTTFA) form a helical membrane-spanning segment. Topologically, residues 566-575 (SCTSLPSSKL) are cytoplasmic. A helical transmembrane segment spans residues 576-596 (FIGLISVSNLFMGIYTGILTF). Residues 597-620 (LDAVSWGRFAEFGIWWETGSGCKV) lie on the Extracellular side of the membrane. A disulfide bridge connects residues Cys-618 and Cys-693. Residues 621–641 (AGFLAVFSSESAIFLLMLATV) traverse the membrane as a helical segment. The Cytoplasmic portion of the chain corresponds to 642-661 (ERSLSAKDIMKNGKSNHLKQ). The helical transmembrane segment at 662 to 682 (FRVAALLAFLGATVAGCFPLF) threads the bilayer. The Extracellular portion of the chain corresponds to 683–703 (HRGEYSASPLCLPFPTGETPS). The chain crosses the membrane as a helical span at residues 704 to 724 (LGFTVTLVLLNSLAFLLMAVI). Residues 725–756 (YTKLYCNLEKEDLSENSQSSMIKHVAWLIFTN) lie on the Cytoplasmic side of the membrane. A helical membrane pass occupies residues 757-777 (CIFFCPVAFFSFAPLITAISI). Over 778–783 (SPEIMK) the chain is Extracellular. The chain crosses the membrane as a helical span at residues 784-804 (SVTLIFFPLPACLNPVLYVFF). Residues 805–951 (NPKFKEDWKL…YAYNLPRVKD (147 aa)) are Cytoplasmic-facing. Residue Ser-920 is modified to Phosphoserine.

Belongs to the G-protein coupled receptor 1 family. In terms of tissue distribution, expressed in multiple steroidogenic tissues: placenta, ovary, testis and adrenal. Expressed also in spinal cord, thyroid, stomach, trachea, heart, pancreas, kidney, prostate and spleen.

It localises to the cell membrane. Receptor for R-spondins that potentiates the canonical Wnt signaling pathway and is involved in the formation of various organs. Upon binding to R-spondins (RSPO1, RSPO2, RSPO3 or RSPO4), associates with phosphorylated LRP6 and frizzled receptors that are activated by extracellular Wnt receptors, triggering the canonical Wnt signaling pathway to increase expression of target genes. In contrast to classical G-protein coupled receptors, does not activate heterotrimeric G-proteins to transduce the signal. Its function as activator of the Wnt signaling pathway is required for the development of various organs, including liver, kidney, intestine, bone, reproductive tract and eye. May also act as a receptor for norrin (NDP), such results however require additional confirmation in vivo. Required during spermatogenesis to activate the Wnt signaling pathway in peritubular myoid cells. Required for the maintenance of intestinal stem cells and Paneth cell differentiation in postnatal intestinal crypts. Acts as a regulator of bone formation and remodeling. Involved in kidney development; required for maintaining the ureteric bud in an undifferentiated state. Involved in the development of the anterior segment of the eye. Required during erythropoiesis. Also acts as a negative regulator of innate immunity by inhibiting TLR2/TLR4 associated pattern-recognition and pro-inflammatory cytokine production. Plays an important role in regulating the circadian rhythms of plasma lipids, partially through regulating the rhythmic expression of MTTP. Required for proper development of GnRH neurons (gonadotropin-releasing hormone expressing neurons) that control the release of reproductive hormones from the pituitary gland. The chain is Leucine-rich repeat-containing G-protein coupled receptor 4 (LGR4) from Homo sapiens (Human).